The chain runs to 150 residues: Transcriptional repressor NrdR (150 aa).

The segment at 3–34 (CPFCAHPDSKVVDSRPDKGGAAIRRRRECESC) is a zinc-finger region. In terms of domain architecture, ATP-cone spans 49-139 (PLVLKKDGRR…VYRSFKDVNE (91 aa)).

Belongs to the NrdR family. Zn(2+) serves as cofactor.

Negatively regulates transcription of bacterial ribonucleotide reductase nrd genes and operons by binding to NrdR-boxes. This Geobacter metallireducens (strain ATCC 53774 / DSM 7210 / GS-15) protein is Transcriptional repressor NrdR.